A 198-amino-acid chain; its full sequence is Photosystem I assembly protein Ycf4 (198 aa).

The tract at residues M1 to S20 is disordered. The next 2 membrane-spanning stretches (helical) occupy residues Y36 to L58 and L78 to W100.

Belongs to the Ycf4 family.

It is found in the cellular thylakoid membrane. Seems to be required for the assembly of the photosystem I complex. The chain is Photosystem I assembly protein Ycf4 from Nostoc sp. (strain PCC 7120 / SAG 25.82 / UTEX 2576).